A 456-amino-acid chain; its full sequence is MDQEEEEIEIPNYFICPISLEIMKDPVTTVSGITYDRQNIVKWLEKVPSCPVTKQPLPLDSDLTPNHMLRRLIQHWCVENETRGVVRISTPRVPPGKLNVVEEIKNLKKFGQEALGREETLQKLEVLAMDGNNRRLMCECGVHKSLILFVVKCTSEDEDGRRRIKGLDESLRLLHLIGIPSNDAKTILMENDRVMESLTWVLHQEDFLSKAYTIVLLRNLTEYTSSHIVERLNPEIFKGIIGFLKDVVNSVNRTSPTVRETVQSSSRPSLGKTEPSKLDHSLVIKQAVTAALMILLETSSWSRNRSLLVDLGAVSELIELEISYTGEKRITELMLGVLSRLCCCANGRAEILAHRGGIAVVTKRLLRVSPAADDRAISILTTVSKFSPENMVVEEMVNVGTVEKLCSVLGMDCGLNLKEKAKEILKDHFDEWKKFPCIDITLLTKLLSISPKGPKI.

Positions Glu9–Arg83 constitute a U-box domain.

Auto-ubiquitinated.

It carries out the reaction S-ubiquitinyl-[E2 ubiquitin-conjugating enzyme]-L-cysteine + [acceptor protein]-L-lysine = [E2 ubiquitin-conjugating enzyme]-L-cysteine + N(6)-ubiquitinyl-[acceptor protein]-L-lysine.. The protein operates within protein modification; protein ubiquitination. Functionally, E3 ubiquitin-protein ligase that acts as a negative regulator of the immunity triggered by the pathogen-associated molecular patterns (PAMPs), in association with PUB22 and PUB23. This is E3 ubiquitin-protein ligase PUB24 (PUB24) from Arabidopsis thaliana (Mouse-ear cress).